A 250-amino-acid polypeptide reads, in one-letter code: 5-oxoprolinase subunit A (250 aa).

This sequence belongs to the LamB/PxpA family. Forms a complex composed of PxpA, PxpB and PxpC.

The catalysed reaction is 5-oxo-L-proline + ATP + 2 H2O = L-glutamate + ADP + phosphate + H(+). Its function is as follows. Catalyzes the cleavage of 5-oxoproline to form L-glutamate coupled to the hydrolysis of ATP to ADP and inorganic phosphate. The sequence is that of 5-oxoprolinase subunit A from Klebsiella pneumoniae (strain 342).